Consider the following 477-residue polypeptide: UDP-N-acetylmuramate--L-alanine ligase (477 aa).

122 to 128 contacts ATP; it reads GTHGKTT.

It belongs to the MurCDEF family.

It localises to the cytoplasm. It carries out the reaction UDP-N-acetyl-alpha-D-muramate + L-alanine + ATP = UDP-N-acetyl-alpha-D-muramoyl-L-alanine + ADP + phosphate + H(+). The protein operates within cell wall biogenesis; peptidoglycan biosynthesis. In terms of biological role, cell wall formation. The protein is UDP-N-acetylmuramate--L-alanine ligase of Xanthomonas axonopodis pv. citri (strain 306).